The sequence spans 982 residues: Ubiquitin carboxyl-terminal hydrolase 37 (982 aa).

Residues 32–34 (KEN) carry the KEN box 1 motif. 2 short sequence motifs (D-box) span residues 71–79 (RLMLTLQDN) and 96–105 (RLFLDAVHQN). S115 is modified (phosphoserine). A disordered region spans residues 128-162 (RTSQKETHRQLSYSDNQVSSKRGSLETKDDIPFRK). Positions 137-149 (QLSYSDNQVSSKR) are enriched in polar residues. A compositionally biased stretch (basic and acidic residues) spans 150-160 (GSLETKDDIPF). A D-box 3 motif is present at residues 161 to 169 (RKVLGNPGR). S171 carries the phosphoserine modification. Residues 183–201 (TRTIPSLTSTSTPLRSGLL) are compositionally biased toward low complexity. Residues 183 to 307 (TRTIPSLTST…TPSAKRSLGF (125 aa)) form a disordered region. S213 is subject to Phosphoserine. A KEN box 2 motif is present at residues 224-226 (KEN). Over residues 246 to 260 (SREKQLSLKQSEENR) the composition is skewed to basic and acidic residues. Positions 282-301 (YSPSSTNLDRTNISSQTPSA) are enriched in polar residues. A USP domain is found at 343–954 (QGFSNLGNTC…SGYIFFYMHK (612 aa)). The Nucleophile role is filled by C352. Phosphoserine; by CDK2 is present on S631. Phosphoserine is present on residues S653 and S655. Disordered stretches follow at residues 672 to 705 (ISSS…GFDA) and 720 to 798 (KREA…GEVD). Composition is skewed to basic and acidic residues over residues 684 to 698 (KDSK…KSEL) and 720 to 735 (KREA…DDKP). Positions 707 to 726 (SEEELLAAVLEISKREASPS) constitute a UIM 1 domain. S773 bears the Phosphoserine mark. Basic and acidic residues predominate over residues 777-789 (ITKDCDENKENKT). The short motif at 785–787 (KEN) is the KEN box 3 element. 2 UIM domains span residues 809-828 (REEQ…QEAW) and 831-850 (KEDD…FNNS). H909 (proton acceptor) is an active-site residue.

It belongs to the peptidase C19 family. In terms of assembly, interacts with FZR1/CDH1. Interacts with CDT1. Polyubiquitinated via 'Lys-11'-linked ubiquitin by the APC(CDH1) complex during late mitosis, leading to its degradation. Able to mediate auto-deubiquitination. Post-translationally, phosphorylated at Ser-631 by CDK2 during G1/S phase but not during mitosis; phosphorylation at Ser-631 is required for deubiquitinase activity. Also polyubiquitinated during early G1 phase, without leading to degradation. Phosphorylated at Ser-115 by ATM following DNA damage, which in turn increases its deubiquitination activity towards BLM.

It localises to the nucleus. The protein localises to the chromosome. It catalyses the reaction Thiol-dependent hydrolysis of ester, thioester, amide, peptide and isopeptide bonds formed by the C-terminal Gly of ubiquitin (a 76-residue protein attached to proteins as an intracellular targeting signal).. In terms of biological role, deubiquitinase that plays a role in different processes including cell cycle regulation, DNA replication or DNA damage response. Antagonizes the anaphase-promoting complex (APC/C) during G1/S transition by mediating deubiquitination of cyclin-A (CCNA1 and CCNA2), thereby promoting S phase entry. Specifically mediates deubiquitination of 'Lys-11'-linked polyubiquitin chains, a specific ubiquitin-linkage type mediated by the APC/C complex. Phosphorylation at Ser-628 during G1/S phase maximizes the deubiquitinase activity, leading to prevent degradation of cyclin-A (CCNA1 and CCNA2). Plays an important role in the regulation of DNA replication by stabilizing the licensing factor CDT1. Also plays an essential role beyond S-phase entry to promote the efficiency and fidelity of replication by deubiquitinating checkpoint kinase 1/CHK1, promoting its stability. Sustains the DNA damage response (DDR) by deubiquitinating and stabilizing the ATP-dependent DNA helicase BLM. Mechanistically, DNA double-strand breaks (DSB) promotes ATM-mediated phosphorylation of USP37 and enhances the binding between USP37 and BLM. Promotes cell migration by deubiquitinating and stabilizing the epithelial-mesenchymal transition (EMT)-inducing transcription factor SNAI. Plays a role in the regulation of mitotic spindle assembly and mitotic progression by associating with chromatin-associated WAPL and stabilizing it through deubiquitination. The polypeptide is Ubiquitin carboxyl-terminal hydrolase 37 (USP37) (Sus scrofa (Pig)).